Consider the following 194-residue polypeptide: Large ribosomal subunit protein bL9 (194 aa).

It belongs to the bacterial ribosomal protein bL9 family.

In terms of biological role, binds to the 23S rRNA. The protein is Large ribosomal subunit protein bL9 of Rhodopseudomonas palustris (strain BisA53).